We begin with the raw amino-acid sequence, 524 residues long: MAEQQLGVLKALDVAKTQLYHFTAIVIAGMGFFTDAYDLFCVSLVTKLLGRIYYFNPESAKPGSLPPHVAAAVNGVALCGTLSGQLFFGWLGDKLGRKKVYGLTLVMMILCSVASGLSFGHEAKGVMTTLCFFRFWLGFGIGGDYPLSATIMSEYANKKTRGAFIAAVFAMQGVGILAGGFVALAVSSIFDKKFPAPTYAVNRALSTPPQVDYIWRIIVMFGALPAALTYYWRMKMPETARYTALVAKNIKQATADMSKVLQTDIELEERVEDDVKDPKQNYGLFSKEFLRRHGLHLLGTTSTWFLLDIAFYSQNLFQKDIFSAIGWIPKAATMNATHEVFRIARAQTLIALCSTVPGYWFTVAFIDTIGRFKIQLNGFFMMTVFMFAIAFPYNHWIKPENRIGFVVMYSLTFFFANFGPNATTFIVPAEIFPARLRSTCHGISAAAGKAGAIVGAFGFLYAAQSQDKAKVDAGYPPGIGVKNSLIMLGVLNFIGMLFTFLVPEPKGKSLEELSGEAEVSHDEK.

At 1-24 (MAEQQLGVLKALDVAKTQLYHFTA) the chain is on the cytoplasmic side. The helical transmembrane segment at 25 to 45 (IVIAGMGFFTDAYDLFCVSLV) threads the bilayer. The Extracellular segment spans residues 46–70 (TKLLGRIYYFNPESAKPGSLPPHVA). Residues 71 to 91 (AAVNGVALCGTLSGQLFFGWL) traverse the membrane as a helical segment. The Cytoplasmic segment spans residues 92 to 99 (GDKLGRKK). A helical transmembrane segment spans residues 100–120 (VYGLTLVMMILCSVASGLSFG). Residues 121 to 131 (HEAKGVMTTLC) lie on the Extracellular side of the membrane. A helical transmembrane segment spans residues 132–152 (FFRFWLGFGIGGDYPLSATIM). At 153–161 (SEYANKKTR) the chain is on the cytoplasmic side. The chain crosses the membrane as a helical span at residues 162 to 182 (GAFIAAVFAMQGVGILAGGFV). Over 183–211 (ALAVSSIFDKKFPAPTYAVNRALSTPPQV) the chain is Extracellular. Residues 212 to 232 (DYIWRIIVMFGALPAALTYYW) form a helical membrane-spanning segment. At 233-292 (RMKMPETARYTALVAKNIKQATADMSKVLQTDIELEERVEDDVKDPKQNYGLFSKEFLRR) the chain is on the cytoplasmic side. A helical membrane pass occupies residues 293–313 (HGLHLLGTTSTWFLLDIAFYS). At 314–348 (QNLFQKDIFSAIGWIPKAATMNATHEVFRIARAQT) the chain is on the extracellular side. The helical transmembrane segment at 349–369 (LIALCSTVPGYWFTVAFIDTI) threads the bilayer. At 370-371 (GR) the chain is on the cytoplasmic side. The helical transmembrane segment at 372–392 (FKIQLNGFFMMTVFMFAIAFP) threads the bilayer. The Extracellular segment spans residues 393-402 (YNHWIKPENR). The chain crosses the membrane as a helical span at residues 403-423 (IGFVVMYSLTFFFANFGPNAT). The Cytoplasmic segment spans residues 424-441 (TFIVPAEIFPARLRSTCH). Residues 442 to 462 (GISAAAGKAGAIVGAFGFLYA) traverse the membrane as a helical segment. The Extracellular portion of the chain corresponds to 463–484 (AQSQDKAKVDAGYPPGIGVKNS). A helical transmembrane segment spans residues 485-505 (LIMLGVLNFIGMLFTFLVPEP). Topologically, residues 506 to 524 (KGKSLEELSGEAEVSHDEK) are cytoplasmic.

The protein belongs to the major facilitator superfamily. Phosphate:H(+) symporter (TC 2.A.1.9) family. Interacts with NLA. In terms of processing, ubiquitinated by NLA. Ubiquitination of PHT1-1 leads to its degradation by the proteasome. Mostly expressed in roots, especially in trichoblasts and in emerging secondary roots and root hairs, but not in root tips. Also present in hydathodes, axillary buds and peripheral endosperm of germinating seeds.

Its subcellular location is the cell membrane. With respect to regulation, inhibited by protonophores (e.g. 2,4-dinitrophenol and carbonylcyanide m-chlorophenylhydrazone), the plasma membrane H(+)-ATPase inhibitor diethylstilbestorol, and the phosphate analog arsenate. High-affinity transporter for external inorganic phosphate. Acts as a H(+):phosphate symporter in both low- and high-Pi conditions. Confers sensitivity to arsenate. This chain is Inorganic phosphate transporter 1-1 (PHT1-1), found in Arabidopsis thaliana (Mouse-ear cress).